Here is a 415-residue protein sequence, read N- to C-terminus: Probable RAD2-like endonuclease 369L (415 aa).

An N-domain region spans residues 1–114 (MGIKNLTKFI…EDVKKKTLSL (114 aa)). Mg(2+)-binding residues include D34, E86, E198, E200, D219, D221, and D277. The segment at 163–297 (VKQRHRYDIR…VKSYELIKVQ (135 aa)) is I-domain.

This sequence belongs to the XPG/RAD2 endonuclease family. Requires Mg(2+) as cofactor.

The protein resides in the host nucleus. Functionally, probable endonuclease. This is Probable RAD2-like endonuclease 369L from Acheta domesticus (House cricket).